Here is a 395-residue protein sequence, read N- to C-terminus: DDB1- and CUL4-associated factor 4-like protein 2 (395 aa).

WD repeat units lie at residues 268-307 (SHDS…CVTQ) and 312-351 (VNNS…LLTT).

The chain is DDB1- and CUL4-associated factor 4-like protein 2 (DCAF4L2) from Homo sapiens (Human).